The primary structure comprises 137 residues: Flavodoxin (137 aa).

Residues 2–137 (VEIVYWSGTG…KELGEAAAKA (136 aa)) form the Flavodoxin-like domain.

Belongs to the flavodoxin family. FMN serves as cofactor.

Its function is as follows. Low-potential electron donor to a number of redox enzymes. The polypeptide is Flavodoxin (Megasphaera elsdenii).